The following is a 362-amino-acid chain: Adenosine deaminase (362 aa).

Zn(2+) contacts are provided by histidine 19 and histidine 21. Substrate-binding residues include histidine 21, aspartate 23, and glycine 181. Histidine 208 is a Zn(2+) binding site. Glutamate 211 functions as the Proton donor in the catalytic mechanism. Residue aspartate 300 coordinates Zn(2+).

It belongs to the metallo-dependent hydrolases superfamily. Adenosine and AMP deaminases family. Adenosine deaminase subfamily. Zn(2+) is required as a cofactor.

The enzyme catalyses adenosine + H2O + H(+) = inosine + NH4(+). It carries out the reaction 2'-deoxyadenosine + H2O + H(+) = 2'-deoxyinosine + NH4(+). In terms of biological role, catalyzes the hydrolytic deamination of adenosine and 2-deoxyadenosine. The sequence is that of Adenosine deaminase from Mycobacteroides abscessus (strain ATCC 19977 / DSM 44196 / CCUG 20993 / CIP 104536 / JCM 13569 / NCTC 13031 / TMC 1543 / L948) (Mycobacterium abscessus).